A 698-amino-acid polypeptide reads, in one-letter code: MSSCASLGGPVPLPPPGPSAALTSGAPARALHVELPSQQRRLRHLRNIAARNIVNRNGHQLLDTYFTLHLCDNEKIFKEFYRSEVIKNSLNPTWRSLDFGIMPDRLDTSVSCFVVKIWGGKEEAFQLLIEWKVYLDGLKYLGQQIHARNQNEIIFGLNDGYYGAPCEHKGHPNAQKNLLQVDQNCVRNSYDVFSLLRLHRAQCAIKQTQVTVQRLGKEIEEKLRLTSTSNELKKESECLRLKILVLRNELERQKKALGREVAFLHKQQMALQDKGSAFSTEHGKLQLQKDSLSELRKECTAKRELFLKTNAQLTIRCRQLLSELSYIYPIDLNENKDYFVCGVKLPNSEDFQAKDDGSIAVALGYTAHLVSMISFFLQVPLRYPIIHKGSRSTIKDNINDKLTEKEREFPLYPKGGEKLQFDYGVYLLNKNIAQLRYQHGLGTPDLRQTLPNLKNFMEHGLMVRCDRHHISNAIPVPKRQSSTFGGADGGFSAGIPSPDKVHRKRASSENERLQYKTPPPSYNSALTQPGVAMPTSGDSERKVAPLSSSLDTSLDFSKENKKAGVDLGSSVSGDHGNSDSGQEQGEALPGHLAAVNGTALPSEQAGPAGTLLPGSCHPAPSAELCCAVEQAEEIIGLEATGFTSGDQLEALSCIPVDSAVAVECDEQVLGEFEEFSRRIYALSENVSSFRRPRRSSDK.

The span at 1–10 (MSSCASLGGP) shows a compositional bias: low complexity. Residues 1 to 21 (MSSCASLGGPVPLPPPGPSAA) form a disordered region. One can recognise a C2 domain in the interval 23 to 149 (TSGAPARALH…YLGQQIHARN (127 aa)). Positions 199-268 (HRAQCAIKQT…REVAFLHKQQ (70 aa)) are sufficient for interaction with STX7; VTI1B AND STX8. Residues 200-304 (RAQCAIKQTQ…LRKECTAKRE (105 aa)) are a coiled coil. A sufficient for interaction with VPS16, required for interaction with CEP63 region spans residues 269-441 (MALQDKGSAF…IAQLRYQHGL (173 aa)). Positions 442–698 (GTPDLRQTLP…FRRPRRSSDK (257 aa)) are required for interaction with PRKDC, XRCC6 and XRCC5. 2 disordered regions span residues 477–551 (PKRQ…SSLD) and 565–586 (VDLG…EQGE). The residue at position 492 (serine 492) is a Phosphoserine. A Phosphoserine; by MTOR modification is found at serine 497. Serine 507 carries the post-translational modification Phosphoserine. A Phosphothreonine modification is found at threonine 517. Phosphoserine is present on residues serine 521, serine 548, serine 549, serine 570, and serine 688.

As to quaternary structure, component of the PI3K (PI3KC3/PI3K-III/class III phosphatidylinositol 3-kinase) complex II (PI3KC3-C2) in which the core composed of the catalytic subunit PIK3C3, the regulatory subunit PIK3R4 and BECN1 is associated with UVRAG; in the complex interacts directly with BECN1. PI3KC3-C2 can associate with further regulatory subunits such as RUBCN and probably SH3GLB1/Bif-1. Interacts with SH3GLB1; UVRAG bridges the interaction to BECN1 indicative for an association with the PI3K complex PI3KC3-C2. Interacts with RINT1. Associates with the NRZ complex under basal conditions and dissociates from it under autophagy conditions to associate with the PI3K complex; these complex associations seem to be mutually exclusive. Interacts with VPS16; VPS11; VPS18; VPS33 (VPS33A or VPS33B) and VPS39; indicative for an association with a class C Vps tethering complex (possibly the HOPS complex). Interacts with RAB7A; RAB7A competes with UVRAG for RUBCN binding. Interacts with STX7, VTI1B, STX8. Interacts with PRKDC, XRCC6 and XRCC5; indicative for an association with the DNA-dependent protein kinase complex DNA-PK. Interacts with CEP63. Directly interacts with FEZ1 and SCOC; the interaction with SCOC is reduced by amino acid starvation, but the complex is stabilized in the presence of FEZ1. Interacts with BECN1P1/BECN2. Interacts with SLAMF1. Interacts with RUBCNL/PACER; promoting targeting of UVRAG to autophagosome. Interacts with WNK1. In terms of processing, phosphorylated at Ser-497 by MTOR under basal conditions; increases the interaction with RUBCN implicated in inhibitory effect of RUBCN on PI3KC3 and decreases interaction with RAB7A, and VPS16 and VPS39 (indicative for a class C Vps complex, possibly the HOPS complex).

The protein localises to the late endosome. It localises to the lysosome. The protein resides in the cytoplasmic vesicle. It is found in the autophagosome. Its subcellular location is the early endosome. The protein localises to the endoplasmic reticulum. It localises to the midbody. The protein resides in the chromosome. It is found in the centromere. In terms of biological role, versatile protein that is involved in regulation of different cellular pathways implicated in membrane trafficking. Involved in regulation of the COPI-dependent retrograde transport from Golgi and the endoplasmic reticulum by associating with the NRZ complex; the function is dependent on its binding to phosphatidylinositol 3-phosphate (PtdIns(3)P). During autophagy acts as a regulatory subunit of the alternative PI3K complex II (PI3KC3-C2) that mediates formation of phosphatidylinositol 3-phosphate and is believed to be involved in maturation of autophagosomes and endocytosis. Activates lipid kinase activity of PIK3C3. Involved in the regulation of degradative endocytic trafficking and cytokinesis, and in regulation of ATG9A transport from the Golgi to the autophagosome; the functions seems to implicate its association with PI3KC3-C2. Involved in maturation of autophagosomes and degradative endocytic trafficking independently of BECN1 but depending on its association with a class C Vps complex (possibly the HOPS complex); the association is also proposed to promote autophagosome recruitment and activation of Rab7 and endosome-endosome fusion events. Enhances class C Vps complex (possibly HOPS complex) association with a SNARE complex and promotes fusogenic SNARE complex formation during late endocytic membrane fusion. In case of negative-strand RNA virus infection is required for efficient virus entry, promotes endocytic transport of virions and is implicated in a VAMP8-specific fusogenic SNARE complex assembly. Its function is as follows. Involved in maintaining chromosomal stability. Promotes DNA double-strand break (DSB) repair by association with DNA-dependent protein kinase complex DNA-PK and activating it in non-homologous end joining (NHEJ). Required for centrosome stability and proper chromosome segregation. The protein is UV radiation resistance-associated protein (Uvrag) of Mus musculus (Mouse).